The following is a 576-amino-acid chain: uncharacterized protein (576 aa).

At 1–8 (MSLSLGAA) the chain is on the cytoplasmic side. The chain crosses the membrane as a helical span at residues 9–29 (IYIALKPIFKIYTIMLVGYLV). Topologically, residues 30-45 (AKFDIVSMENAKGISN) are extracellular. Residues 46 to 66 (MVVNAILPCLTFNKIVSNISW) traverse the membrane as a helical segment. Residues 67 to 71 (RDIKE) lie on the Cytoplasmic side of the membrane. A helical transmembrane segment spans residues 72-92 (IGVIILSAFILFVLGATGALF). At 93–103 (TTFATTVPKKF) the chain is on the extracellular side. A helical transmembrane segment spans residues 104–124 (FWGLIFAGFFPNISDLPIAYI). The Cytoplasmic segment spans residues 125–141 (QSMGNGSIFTAEEADKG). A helical membrane pass occupies residues 142-162 (VAYSCIFLFIQSFLMMNFGMW). The Extracellular portion of the chain corresponds to 163–400 (RVVGLDFRDT…FIINCLRPAS (238 aa)). Residues 401-421 (LGAILGIICALIPWVKACFVT) form a helical membrane-spanning segment. The Cytoplasmic portion of the chain corresponds to 422-437 (TYVHVHKAPDGEPVLN). Residues 438–458 (FLMDFTEYIGNACVPLGLLLL) traverse the membrane as a helical segment. At 459–476 (GGTLARLEIKSLPPGFIK) the chain is on the extracellular side. The chain crosses the membrane as a helical span at residues 477-497 (SALLMTCFRLIVIPIIGVLWV). Residues 498 to 512 (NKLYSIDWLDTGIGK) lie on the Cytoplasmic side of the membrane. The chain crosses the membrane as a helical span at residues 513 to 533 (FDMILTWSMPSATAQVYFTAF). The Extracellular portion of the chain corresponds to 534–545 (YTPACGDHIQMN). The helical transmembrane segment at 546–566 (CLSVLFVMQYAILFITVAFVV) threads the bilayer. At 567-576 (TYTLKVDLKV) the chain is on the cytoplasmic side.

Belongs to the auxin efflux carrier (TC 2.A.69) family.

The protein resides in the membrane. This is an uncharacterized protein from Saccharomyces cerevisiae (strain ATCC 204508 / S288c) (Baker's yeast).